Consider the following 484-residue polypeptide: tRNA sulfurtransferase (484 aa).

The region spanning 63–167 (EAFGERLACI…NDNLYLIDKR (105 aa)) is the THUMP domain. ATP contacts are provided by residues 185-186 (LI), K267, G289, and Q298. A disulfide bond links C346 and C458. One can recognise a Rhodanese domain in the interval 406 to 484 (INANEIIIDV…GYTNVKVYRP (79 aa)). Residue C458 is the Cysteine persulfide intermediate of the active site.

This sequence belongs to the ThiI family.

The protein resides in the cytoplasm. The catalysed reaction is [ThiI sulfur-carrier protein]-S-sulfanyl-L-cysteine + a uridine in tRNA + 2 reduced [2Fe-2S]-[ferredoxin] + ATP + H(+) = [ThiI sulfur-carrier protein]-L-cysteine + a 4-thiouridine in tRNA + 2 oxidized [2Fe-2S]-[ferredoxin] + AMP + diphosphate. The enzyme catalyses [ThiS sulfur-carrier protein]-C-terminal Gly-Gly-AMP + S-sulfanyl-L-cysteinyl-[cysteine desulfurase] + AH2 = [ThiS sulfur-carrier protein]-C-terminal-Gly-aminoethanethioate + L-cysteinyl-[cysteine desulfurase] + A + AMP + 2 H(+). Its pathway is cofactor biosynthesis; thiamine diphosphate biosynthesis. Catalyzes the ATP-dependent transfer of a sulfur to tRNA to produce 4-thiouridine in position 8 of tRNAs, which functions as a near-UV photosensor. Also catalyzes the transfer of sulfur to the sulfur carrier protein ThiS, forming ThiS-thiocarboxylate. This is a step in the synthesis of thiazole, in the thiamine biosynthesis pathway. The sulfur is donated as persulfide by IscS. This chain is tRNA sulfurtransferase, found in Shewanella halifaxensis (strain HAW-EB4).